The sequence spans 139 residues: Putative nickel-responsive regulator (139 aa).

Residues His79, His90, His92, and Cys98 each coordinate Ni(2+).

This sequence belongs to the transcriptional regulatory CopG/NikR family. It depends on Ni(2+) as a cofactor.

Transcriptional regulator. The polypeptide is Putative nickel-responsive regulator (Anaeromyxobacter dehalogenans (strain 2CP-1 / ATCC BAA-258)).